Consider the following 430-residue polypeptide: Shufflon protein A' (430 aa).

The segment at Met-1–Gly-361 is constant region. Positions Thr-362–Asn-430 are variable region.

This chain is Shufflon protein A', found in Escherichia coli.